The chain runs to 116 residues: Proline-rich protein 9 (116 aa).

In Homo sapiens (Human), this protein is Proline-rich protein 9 (PRR9).